A 358-amino-acid polypeptide reads, in one-letter code: MLFKEAQAFIENMYKECHYETQIINKRLHDIELEIKETGTYTHTEEELIYGAKMAWRNSNRCIGRLFWDSLNVIDARDVTDEASFLSSITYHITQATNEGKLKPYITIYAPKDGPKIFNNQLIRYAGYDNCGDPAEKEVTRLANHLGWKGKGTNFDVLPLIYQLPNESVKFYEYPTSLIKEVPIEHNHYPKLRKLNLKWYAVPIISNMDLKIGGIVYPTAPFNGWYMVTEIGVRNFIDDYRYNLLEKVADAFEFDTLKNNSFNKDRALVELNYAVYHSFKKEGVSIVDHLTAAKQFELFERNEAQQGRQVTGKWSWLAPPLSPTLTSNYHHGYDNTVKDPNFFYKKKESNANQCPFHH.

A heme-binding site is contributed by cysteine 62.

It belongs to the NOS family. Bacterial NOS oxygenase subfamily. As to quaternary structure, homodimer. It depends on heme as a cofactor. The cofactor is (6S)-5,6,7,8-tetrahydrofolate.

It carries out the reaction 3 reduced [flavodoxin] + 2 L-arginine + 4 O2 = 3 oxidized [flavodoxin] + 2 L-citrulline + 2 nitric oxide + 4 H2O + 5 H(+). Its function is as follows. Catalyzes the production of nitric oxide. The sequence is that of Nitric oxide synthase oxygenase (nos) from Staphylococcus aureus (strain COL).